Reading from the N-terminus, the 518-residue chain is Mitochondrial distribution and morphology protein 34 (518 aa).

The SMP-LTD domain maps to 1-198 (MSFKVNWNTL…LPTLIHRLSL (198 aa)). 2 disordered regions span residues 335–369 (SRPKRRVIKLGSKKSSVKSTPSAETLASPIPSEMS) and 491–518 (IPDVKSHPGTGRKLDTGFEMPPPPPYQV). Over residues 336 to 350 (RPKRRVIKLGSKKSS) the composition is skewed to basic residues. The segment covering 492-506 (PDVKSHPGTGRKLDT) has biased composition (basic and acidic residues).

This sequence belongs to the MDM34 family. As to quaternary structure, component of the ER-mitochondria encounter structure (ERMES) or MDM complex, composed of MMM1, MDM10, MDM12 and MDM34.

The protein localises to the mitochondrion outer membrane. Functionally, component of the ERMES/MDM complex, which serves as a molecular tether to connect the endoplasmic reticulum (ER) and mitochondria. Components of this complex are involved in the control of mitochondrial shape and protein biogenesis, and function in nonvesicular lipid trafficking between the ER and mitochondria. MDM34 is required for the interaction of the ER-resident membrane protein MMM1 and the outer mitochondrial membrane-resident beta-barrel protein MDM10. This Meyerozyma guilliermondii (strain ATCC 6260 / CBS 566 / DSM 6381 / JCM 1539 / NBRC 10279 / NRRL Y-324) (Yeast) protein is Mitochondrial distribution and morphology protein 34.